The primary structure comprises 142 residues: Hemoglobin subunit alpha (142 aa).

The Globin domain occupies 2–142 (VLSADDKANI…VSTVLTSKYR (141 aa)). Ser-4 carries the phosphoserine modification. N6-succinyllysine occurs at positions 8 and 12. Lys-17 carries the N6-acetyllysine; alternate modification. Residue Lys-17 is modified to N6-succinyllysine; alternate. Tyr-25 carries the post-translational modification Phosphotyrosine. Ser-36 bears the Phosphoserine mark. An N6-succinyllysine modification is found at Lys-41. A Phosphoserine modification is found at Ser-50. His-59 lines the O2 pocket. Residue His-88 participates in heme b binding. Residue Thr-109 is modified to Phosphothreonine. Residues Ser-125 and Ser-132 each carry the phosphoserine modification. Phosphothreonine occurs at positions 135 and 138. Ser-139 carries the post-translational modification Phosphoserine.

It belongs to the globin family. Heterotetramer of two alpha chains and two beta chains. In terms of tissue distribution, red blood cells.

Involved in oxygen transport from the lung to the various peripheral tissues. Functionally, hemopressin acts as an antagonist peptide of the cannabinoid receptor CNR1. Hemopressin-binding efficiently blocks cannabinoid receptor CNR1 and subsequent signaling. This chain is Hemoglobin subunit alpha (HBA), found in Cricetomys gambianus (Northern giant pouched rat).